The primary structure comprises 536 residues: Lariat debranching enzyme (536 aa).

4 residues coordinate a divalent metal cation: C8, H10, D39, and N84. The segment at 124–154 (SGIFKSHDYRKGHFECPPYNQQTIRSAYHVR) is lariat recognition loop. H174, H226, and H228 together coordinate a divalent metal cation. The segment at 388–536 (EEGSVRGEYE…YAAEDEDEAK (149 aa)) is disordered. Residues 414–426 (EYNTDNSGLSSIN) are compositionally biased toward polar residues. Over residues 430–441 (IMLDDEGGDEDL) the composition is skewed to acidic residues. Residues 484–504 (ELEKSGVNKQVEEKSLNERPL) are compositionally biased toward basic and acidic residues.

Belongs to the lariat debranching enzyme family. The cofactor is Fe(2+). Zn(2+) is required as a cofactor. Mn(2+) serves as cofactor.

It localises to the nucleus. With respect to regulation, active in presence of diverse metals including Fe(2+), Zn(2+), Mn(2+). Also activated by Ca(2+). Binds two metal cations in two adjacent alpha and beta metal-binding pockets. Cleaves the 2'-5' phosphodiester linkage at the branch point of excised lariat intron RNA and converts them into linear molecules that can be subsequently degraded, thereby facilitating ribonucleotide turnover. Linked to its role in pre-mRNA processing mechanism, may also participate in retrovirus replication and have an antiviral cell-intrinsic defense function. The sequence is that of Lariat debranching enzyme (DBR1) from Gallus gallus (Chicken).